We begin with the raw amino-acid sequence, 183 residues long: Translation initiation factor IF-3 (183 aa).

The protein belongs to the IF-3 family. As to quaternary structure, monomer.

It is found in the cytoplasm. IF-3 binds to the 30S ribosomal subunit and shifts the equilibrium between 70S ribosomes and their 50S and 30S subunits in favor of the free subunits, thus enhancing the availability of 30S subunits on which protein synthesis initiation begins. The protein is Translation initiation factor IF-3 of Vibrio cholerae serotype O1 (strain ATCC 39315 / El Tor Inaba N16961).